The following is a 333-amino-acid chain: Protoheme IX farnesyltransferase (333 aa).

Transmembrane regions (helical) follow at residues 63–83 (LACT…LNCI), 109–129 (AAFI…VSGV), 132–152 (LAAG…TAIL), 160–180 (IVIG…AASG), 188–208 (WLFS…ALLL), 214–234 (AVGI…RAIS), 245–265 (GFGV…LIPF), and 292–312 (WSIF…LPMA).

It belongs to the UbiA prenyltransferase family. Protoheme IX farnesyltransferase subfamily.

Its subcellular location is the cell inner membrane. It carries out the reaction heme b + (2E,6E)-farnesyl diphosphate + H2O = Fe(II)-heme o + diphosphate. Its pathway is porphyrin-containing compound metabolism; heme O biosynthesis; heme O from protoheme: step 1/1. In terms of biological role, converts heme B (protoheme IX) to heme O by substitution of the vinyl group on carbon 2 of heme B porphyrin ring with a hydroxyethyl farnesyl side group. The polypeptide is Protoheme IX farnesyltransferase (Prochlorococcus marinus (strain MIT 9313)).